The primary structure comprises 555 residues: Neutral amino acid transporter B(0) (555 aa).

N-acetylmethionine is present on M1. At 1–52 (MAVDPPKADPKGVVAVDPTANCGSGLKSREDQGAKAGGCCSSRDQVCRCLRA) the chain is on the cytoplasmic side. The chain crosses the membrane as a helical span at residues 53-82 (NLLVLLTVAAAVAGVVLGLGVSAAGGAEAL). Topologically, residues 83–95 (GHARFTAFAFPGE) are extracellular. The helical transmembrane segment at 96-117 (LLLRLLEMIILPLVVCSLIGGA) threads the bilayer. Residues 118-131 (ASLDPSALGRLGAW) lie on the Cytoplasmic side of the membrane. A helical membrane pass occupies residues 132–154 (ALLFFLVTTLLSSALGVALALAL). Topologically, residues 155–239 (KPGAAFAAIN…SNATMDQPHC (85 aa)) are extracellular. 2 N-linked (GlcNAc...) asparagine glycosylation sites follow: N164 and N231. The chain crosses the membrane as a helical span at residues 240 to 262 (EMKMNILGLVVFAIVFGVALRKL). Topologically, residues 263-271 (GPEGELLIR) are cytoplasmic. A helical membrane pass occupies residues 272 to 299 (FFNSFNDATMVLVSWIMWYAPIGILFLV). The Extracellular portion of the chain corresponds to 300-320 (AGKIVEMKDIRQLFIGLGKYI). The helical transmembrane segment at 321 to 342 (VCCLLGHAIHGLLVLPLIYFLF) threads the bilayer. Topologically, residues 343 to 347 (TRKNP) are cytoplasmic. Residues 348-378 (YRFLWGIVTPLATAFGTSSSSATLPLMMKCV) constitute an intramembrane region (discontinuously helical). Residues 379-387 (EEKNGVAKH) are Cytoplasmic-facing. A helical transmembrane segment spans residues 388–414 (ISRFILPIGATVNMDGAALFQCVAAVF). G396, T398, and N400 together coordinate Na(+). Residues 415-427 (IAQLNGMSLDFVK) are Extracellular-facing. The segment at residues 428–461 (IITILVTATASSVGAAGIPAGGVLTLAIILEAIS) is an intramembrane region (discontinuously helical). The Extracellular portion of the chain corresponds to 462 to 474 (LPVKDISLILAVD). The helical transmembrane segment at 475–496 (WLVDRSCTVLNVEGDAFGAGLL) threads the bilayer. Na(+) is bound by residues N485 and D489. Over 497–555 (QSYVDRTKMPSSEPELIQVKNDVSLKPLPLATEEGNPLLKQCREPSGDSSATCEKESVM) the chain is Cytoplasmic. S507, S508, S520, S545, and S553 each carry phosphoserine. The interval 534-555 (LLKQCREPSGDSSATCEKESVM) is disordered.

It belongs to the dicarboxylate/amino acid:cation symporter (DAACS) (TC 2.A.23) family. Homotrimer.

The protein resides in the cell membrane. The protein localises to the melanosome. The enzyme catalyses L-glutamine(out) + L-serine(in) + Na(+)(out) = L-glutamine(in) + L-serine(out) + Na(+)(in). It carries out the reaction L-glutamine(in) + L-serine(out) + Na(+)(out) = L-glutamine(out) + L-serine(in) + Na(+)(in). It catalyses the reaction L-threonine(in) + L-glutamine(out) + Na(+)(out) = L-threonine(out) + L-glutamine(in) + Na(+)(in). The catalysed reaction is L-threonine(out) + L-glutamine(in) + Na(+)(out) = L-threonine(in) + L-glutamine(out) + Na(+)(in). The enzyme catalyses L-asparagine(in) + L-glutamine(out) + Na(+)(out) = L-asparagine(out) + L-glutamine(in) + Na(+)(in). It carries out the reaction L-asparagine(out) + L-glutamine(in) + Na(+)(out) = L-asparagine(in) + L-glutamine(out) + Na(+)(in). It catalyses the reaction L-glutamine(in) + L-alanine(out) + Na(+)(out) = L-glutamine(out) + L-alanine(in) + Na(+)(in). The catalysed reaction is L-valine(out) + L-glutamine(in) + Na(+)(out) = L-valine(in) + L-glutamine(out) + Na(+)(in). The enzyme catalyses L-glutamine(in) + L-methionine(out) + Na(+)(out) = L-glutamine(out) + L-methionine(in) + Na(+)(in). It carries out the reaction L-glutamine(in) + L-glutamate(out) + Na(+)(out) + H(+)(out) = L-glutamine(out) + L-glutamate(in) + Na(+)(in) + H(+)(in). It catalyses the reaction D-serine(in) + L-glutamine(out) + Na(+)(out) = D-serine(out) + L-glutamine(in) + Na(+)(in). The catalysed reaction is D-serine(in) + L-alanine(out) + Na(+)(out) = D-serine(out) + L-alanine(in) + Na(+)(in). The enzyme catalyses nitrate(in) = nitrate(out). It carries out the reaction iodide(out) = iodide(in). It catalyses the reaction thiocyanate(in) = thiocyanate(out). With respect to regulation, down-regulated at acidic pH. Functionally, sodium-coupled antiporter of neutral amino acids. In a tri-substrate transport cycle, exchanges neutral amino acids between the extracellular and intracellular compartments, coupled to the inward cotransport of at least one sodium ion. The preferred substrate is the essential amino acid L-glutamine, a precursor for biosynthesis of proteins, nucleotides and amine sugars as well as an alternative fuel for mitochondrial oxidative phosphorylation. Exchanges L-glutamine with other neutral amino acids such as L-serine, L-threonine and L-asparagine in a bidirectional way. Provides L-glutamine to proliferating stem and activated cells driving the metabolic switch toward cell differentiation. The transport cycle is usually pH-independent, with the exception of L-glutamate. Transports extracellular L-glutamate coupled to the cotransport of one proton and one sodium ion in exchange for intracellular L-glutamine counter-ion. May provide for L-glutamate uptake in glial cells regulating glutamine/glutamate cycle in the nervous system. Can transport D-amino acids. Mediates D-serine release from the retinal glia potentially affecting NMDA receptor function in retinal neurons. Displays sodium- and amino acid-dependent but uncoupled channel-like anion conductance with a preference SCN(-) &gt;&gt; NO3(-) &gt; I(-) &gt; Cl(-). Through binding of the fusogenic protein syncytin-1/ERVW-1 may mediate trophoblasts syncytialization, the spontaneous fusion of their plasma membranes, an essential process in placental development. The sequence is that of Neutral amino acid transporter B(0) (Slc1a5) from Rattus norvegicus (Rat).